Here is a 199-residue protein sequence, read N- to C-terminus: MTAAVWTLLLAYLFGSVPAGVLVARTYGVDLRKVGSGNIGATNVLRALGWGPALVVAFFDVFKGGIAVLVARAFGLSDWMLGGVALMAVLGHNYSVFLRFRGGKGVATSFGTLLFLDPVLALWTFPIGLSVILLTRYVSAGSMTGGVAAFVLSLALGRPLWEVATVFLMALLIFWTHRENLKRLREGTERRLGERVEAR.

A run of 5 helical transmembrane segments spans residues 3–23 (AAVWTLLLAYLFGSVPAGVLV), 50–70 (WGPALVVAFFDVFKGGIAVLV), 78–98 (DWMLGGVALMAVLGHNYSVFL), 113–133 (LLFLDPVLALWTFPIGLSVIL), and 154–174 (LALGRPLWEVATVFLMALLIF).

The protein belongs to the PlsY family. In terms of assembly, probably interacts with PlsX.

Its subcellular location is the cell inner membrane. It carries out the reaction an acyl phosphate + sn-glycerol 3-phosphate = a 1-acyl-sn-glycero-3-phosphate + phosphate. Its pathway is lipid metabolism; phospholipid metabolism. Functionally, catalyzes the transfer of an acyl group from acyl-phosphate (acyl-PO(4)) to glycerol-3-phosphate (G3P) to form lysophosphatidic acid (LPA). This enzyme utilizes acyl-phosphate as fatty acyl donor, but not acyl-CoA or acyl-ACP. This Thermus thermophilus (strain ATCC 27634 / DSM 579 / HB8) protein is Glycerol-3-phosphate acyltransferase.